We begin with the raw amino-acid sequence, 435 residues long: GTPase Obg (435 aa).

The 159-residue stretch at 6-164 folds into the Obg domain; it reads ADFVDRVKIF…RWLELELKIL (159 aa). One can recognise an OBG-type G domain in the interval 165–335; it reads ADVGLVGYPN…LVSKLASIVR (171 aa). Residues 171 to 178, 196 to 200, 217 to 220, 287 to 290, and 316 to 318 contribute to the GTP site; these read GYPNVGKS, FTTLI, DIPG, NKID, and SAV. The Mg(2+) site is built by Ser178 and Thr198. Residues 357–435 form the OCT domain; it reads RRLPEKFHLE…IGDFEFEYRE (79 aa).

It belongs to the TRAFAC class OBG-HflX-like GTPase superfamily. OBG GTPase family. As to quaternary structure, monomer. It depends on Mg(2+) as a cofactor.

It is found in the cytoplasm. Functionally, an essential GTPase which binds GTP, GDP and possibly (p)ppGpp with moderate affinity, with high nucleotide exchange rates and a fairly low GTP hydrolysis rate. Plays a role in control of the cell cycle, stress response, ribosome biogenesis and in those bacteria that undergo differentiation, in morphogenesis control. This chain is GTPase Obg, found in Thermotoga petrophila (strain ATCC BAA-488 / DSM 13995 / JCM 10881 / RKU-1).